We begin with the raw amino-acid sequence, 336 residues long: MAELKLGYKASAEQFAPRELVELAVAAEAHGMDSATVSDHFQPWRHEGGHAPFSLAWMTAVGERTTRITLGTSVLTPTFRYNPAVVAQAFATMACLYPGRIFLGVGTGEALNEIATGYQGEWPEFKERFARLRESVRLMRELWRGDRVDFDGEYYRLKGASIYDVPDGGVPIYIAAGGPAVAKYAGRAGDGFICTSGKGEELYKDKLIPAVKEGAAINDRNVDDIDKMIEIKISYDPDPELALENTRFWAPLSLTAEQKHSIDDPIEMEKAADALPIEQVAKRWIVASDPDEAVAKVKDYVDWGLNHLVFHAPGHDQRRFLELFEKDLAPRLRRLG.

A coenzyme F420-(gamma-Glu)n-binding site is contributed by aspartate 39. Histidine 40 serves as the catalytic Proton donor. Residues threonine 76 and 107 to 108 (TG) contribute to the coenzyme F420-(gamma-Glu)n site. The Proton acceptor role is filled by glutamate 109. Coenzyme F420-(gamma-Glu)n is bound by residues asparagine 112, 177 to 178 (GG), and 180 to 181 (AV). The substrate site is built by threonine 195, lysine 198, lysine 259, and arginine 283.

This sequence belongs to the F420-dependent glucose-6-phosphate dehydrogenase family. Homodimer.

The enzyme catalyses oxidized coenzyme F420-(gamma-L-Glu)(n) + D-glucose 6-phosphate + H(+) = 6-phospho-D-glucono-1,5-lactone + reduced coenzyme F420-(gamma-L-Glu)(n). Catalyzes the coenzyme F420-dependent oxidation of glucose 6-phosphate (G6P) to 6-phosphogluconolactone. Appears to have a role in resistance to oxidative stress, via its consumption of G6P that serves as a source of reducing power to combat oxidative stress in mycobacteria. The chain is F420-dependent glucose-6-phosphate dehydrogenase from Mycobacterium avium (strain 104).